The chain runs to 975 residues: NLR family member X1 (975 aa).

A mitochondrion-targeting transit peptide spans 1–86 (MRWGHHLPRA…EAIQRHRRNL (86 aa)). The tract at residues 75 to 556 (ATEAIQRHRR…RALPLLFNLI (482 aa)) is required for interaction with MAVS. The 324-residue stretch at 160 to 483 (QTVVLYGTVG…LRFFLAPCVE (324 aa)) folds into the NACHT domain. Residue 166-173 (GTVGTGKS) participates in ATP binding. A required for the repression of MAVS-induced interferon signaling region spans residues 556 to 974 (IKVVPRVFGR…ALLEQLGSSG (419 aa)). Positions 667–694 (RQVLPPSELLDHLFFHYEFQNQRFSAEV) constitute an LRRNT domain. LRR repeat units lie at residues 695 to 718 (LSSL…VVAA), 724 to 747 (RHAL…TLLP), 749 to 777 (FLRA…LLHD), 778 to 801 (QCQI…VLME), 811 to 834 (HLSL…LDRN), 835 to 857 (RQLQ…ALAR), 858 to 877 (AARE…ELSS), and 878 to 899 (EGRQ…VVVS). One can recognise an LRRCT domain in the interval 906–970 (VSEYWSVILS…GEVRALLEQL (65 aa)).

The protein belongs to the NLRP family. Homohexamer. Interacts with MAVS. Interacts with TUFM. In terms of assembly, (Microbial infection) Interacts with influenza A virus protein PB1-F2. Ubiquitously expressed. Strongest expression in mammary gland, heart and muscle. Detected in HeLa, HEK293T, THP-1, HL-60, Raji and Jurkat cell lines (at protein level).

The protein resides in the mitochondrion outer membrane. In terms of biological role, participates in antiviral signaling. Acts as a negative regulator of MAVS-mediated antiviral responses, through the inhibition of the virus-induced RLH (RIG-like helicase)-MAVS interaction. Instead, promotes autophagy by interacting with TUFM and subsequently recruiting the autophagy-related proteins ATG5 and ATG12. Also regulates MAVS-dependent NLRP3 inflammasome activation to attenuate apoptosis. Has no inhibitory function on NF-kappa-B signaling pathway, but enhances NF-kappa-B and JUN N-terminal kinase dependent signaling through the production of reactive oxygen species. Regulates viral mediated-inflammation and energy metabolism in a sex-dependent manner. In females, prevents uncontrolled inflammation and energy metabolism and thus, may contribute to the sex differences observed in infectious and inflammatory diseases. This is NLR family member X1 (NLRX1) from Homo sapiens (Human).